A 547-amino-acid polypeptide reads, in one-letter code: Apolipoprotein N-acyltransferase (547 aa).

The next 6 membrane-spanning stretches (helical) occupy residues 31–51 (PLPAWSLAPVQVIALAVAAHA), 65–85 (GWLFAMFSFSLGLYWLYVSMH), 89–109 (GLAAPLAAAGVLALSAFLALF), 144–164 (AACWAALEWLRAVVLTGFPWL), 181–201 (LLGVHGMALLAAFAAAALAGL), and 215–235 (LAAGVALLLAGAGWLLGQFSW). A CN hydrolase domain is found at 248 to 511 (VQGNVEQSQK…AGVLPVAVQG (264 aa)). Residue E292 is the Proton acceptor of the active site. Residue K366 is part of the active site. C416 functions as the Nucleophile in the catalytic mechanism.

The protein belongs to the CN hydrolase family. Apolipoprotein N-acyltransferase subfamily.

It localises to the cell inner membrane. The enzyme catalyses N-terminal S-1,2-diacyl-sn-glyceryl-L-cysteinyl-[lipoprotein] + a glycerophospholipid = N-acyl-S-1,2-diacyl-sn-glyceryl-L-cysteinyl-[lipoprotein] + a 2-acyl-sn-glycero-3-phospholipid + H(+). It functions in the pathway protein modification; lipoprotein biosynthesis (N-acyl transfer). In terms of biological role, catalyzes the phospholipid dependent N-acylation of the N-terminal cysteine of apolipoprotein, the last step in lipoprotein maturation. The chain is Apolipoprotein N-acyltransferase from Bordetella bronchiseptica (strain ATCC BAA-588 / NCTC 13252 / RB50) (Alcaligenes bronchisepticus).